A 180-amino-acid chain; its full sequence is Transcription factor HES-7.1-B (180 aa).

Residues 13–70 (HRKLLKPLVEKRRRERINNSLEKLRIFLSQTLKSEKLKNPKVEKAEILECTVQFLQSR) form the bHLH domain. In terms of domain architecture, Orange spans 84–116 (YQSGFQHCLETTLHFMNSKPDMNGVTKELLSHQ). Residues 176 to 179 (WRPW) carry the WRPW motif motif.

In terms of assembly, transcription repression requires formation of a complex with a corepressor protein of the Groucho/TLE family. Expressed in the presumptive midbrain-hindbrain boundary (MHB) as early as the early gastrula stage (stage 10.5). Expression in the MHB continues through to tailbud stage. Also transiently expressed in the eye anlage at late neurula stage.

The protein resides in the nucleus. Functionally, transcriptional repressor. Represses transcription from both N box- and E box-containing promoters. Demarcates the prospective midbrain-hindbrain boundary (MHB) region in the neuroectoderm in early gastrulae embryos by repressing transcription of a number of target genes. This chain is Transcription factor HES-7.1-B (hes7.1-b), found in Xenopus laevis (African clawed frog).